The chain runs to 248 residues: ATP synthase delta chain, chloroplastic (248 aa).

The N-terminal 60 residues, 1–60 (MAALQQTPITFQSRSPPPTQIISGPTAKLSFSGGLKLPKLTIKLRSNRTSRRGGGAAGSK), are a transit peptide targeting the chloroplast.

Belongs to the ATPase delta chain family. In terms of assembly, F-type ATPases have 2 components, CF(1) - the catalytic core - and CF(0) - the membrane proton channel. CF(1) has five subunits: alpha(3), beta(3), gamma(1), delta(1), epsilon(1). CF(0) has three main subunits: a, b and c.

It localises to the plastid. The protein localises to the chloroplast thylakoid membrane. In terms of biological role, this protein seems to be part of the stalk that links CF(0) to CF(1). It either transmits conformational changes from CF(0) into CF(1) or is implicated in proton conduction. This is ATP synthase delta chain, chloroplastic (ATPD) from Nicotiana tabacum (Common tobacco).